A 177-amino-acid polypeptide reads, in one-letter code: dCTP deaminase (177 aa).

Residues 100-105 (RSSIAR) and Asp-116 contribute to the dCTP site. The active-site Proton donor/acceptor is the Glu-126. DCTP-binding residues include Tyr-159 and Gln-166.

It belongs to the dCTP deaminase family. In terms of assembly, homotrimer.

The catalysed reaction is dCTP + H2O + H(+) = dUTP + NH4(+). It functions in the pathway pyrimidine metabolism; dUMP biosynthesis; dUMP from dCTP (dUTP route): step 1/2. Functionally, catalyzes the deamination of dCTP to dUTP. This Korarchaeum cryptofilum (strain OPF8) protein is dCTP deaminase.